The primary structure comprises 636 residues: Biosynthetic arginine decarboxylase (636 aa).

Position 110 is an N6-(pyridoxal phosphate)lysine (Lys-110). Residue 290 to 300 coordinates substrate; the sequence is IDVGGGLGVDY.

It belongs to the Orn/Lys/Arg decarboxylase class-II family. SpeA subfamily. Mg(2+) is required as a cofactor. Requires pyridoxal 5'-phosphate as cofactor.

It carries out the reaction L-arginine + H(+) = agmatine + CO2. Its function is as follows. Catalyzes the biosynthesis of agmatine from arginine. The chain is Biosynthetic arginine decarboxylase from Pseudomonas aeruginosa (strain ATCC 15692 / DSM 22644 / CIP 104116 / JCM 14847 / LMG 12228 / 1C / PRS 101 / PAO1).